A 335-amino-acid chain; its full sequence is Probable nicotianamine synthase 3 (335 aa).

Belongs to the nicotianamine synthase (NAS)-like family.

It catalyses the reaction 3 S-adenosyl-L-methionine = nicotianamine + 3 S-methyl-5'-thioadenosine + 3 H(+). Synthesizes nicotianamine, a polyamine that is the first intermediate in the synthesis of the phytosiderophores of the mugineic acid type found in gramineae which serves as a sensor for the physiological iron status within the plant, and/or might be involved in the transport of iron. The sequence is that of Probable nicotianamine synthase 3 (NAS3) from Hordeum vulgare (Barley).